Here is a 337-residue protein sequence, read N- to C-terminus: Dehydrogenase FUB6 (337 aa).

The protein belongs to the zinc-containing alcohol dehydrogenase family. Quinone oxidoreductase subfamily.

The protein operates within mycotoxin biosynthesis. Functionally, dehydrogenase; part of the gene cluster that mediates the biosynthesis of fusaric acid, a mycotoxin with low to moderate toxicity to animals and humans, but with high phytotoxic properties. L-aspartate is suggested as fusaric acid amino acid precursor that is activated and further processed to O-acetyl-L-homoserine by cluster enzymes aspartate kinase FUB3 and homoserine O-acetyltransferase FUB5, as well as enzymes of the primary metabolism. The polyketide synthase (PKS) FUB1 generates the triketide trans-2-hexenal which is presumptively released by the hydrolase FUB4 and linked to the NRPS-bound amino acid precursor by NAD(P)-dependent dehydrogenase FUB6. FUB1, FUB4, and the non-canonical NRPS Fub8 may form an enzyme complex. Further processing of the NRPS-bound intermediate might be carried out by FUB6 and the O-acetylhomoserine FUB7, enabling a spontaneous electrocyclization to close the carbon backbone of fusaric acid. Dihydrofusaric acid is likely to be released via reduction by the thioester reductase (TR) domain of FUB8 whereupon the final oxidation to fusaric acid may (also) be performed by the FMN-dependent dehydrogenase FUB9. In Gibberella fujikuroi (strain CBS 195.34 / IMI 58289 / NRRL A-6831) (Bakanae and foot rot disease fungus), this protein is Dehydrogenase FUB6.